The following is a 221-amino-acid chain: FMN-dependent NADH:quinone oxidoreductase 1 (221 aa).

FMN contacts are provided by residues 17–19 and 148–151; these read SAS and SSGG.

This sequence belongs to the azoreductase type 1 family. In terms of assembly, homodimer. FMN is required as a cofactor.

The catalysed reaction is 2 a quinone + NADH + H(+) = 2 a 1,4-benzosemiquinone + NAD(+). The enzyme catalyses N,N-dimethyl-1,4-phenylenediamine + anthranilate + 2 NAD(+) = 2-(4-dimethylaminophenyl)diazenylbenzoate + 2 NADH + 2 H(+). Functionally, quinone reductase that provides resistance to thiol-specific stress caused by electrophilic quinones. Its function is as follows. Also exhibits azoreductase activity. Catalyzes the reductive cleavage of the azo bond in aromatic azo compounds to the corresponding amines. This is FMN-dependent NADH:quinone oxidoreductase 1 from Clostridium acetobutylicum (strain ATCC 824 / DSM 792 / JCM 1419 / IAM 19013 / LMG 5710 / NBRC 13948 / NRRL B-527 / VKM B-1787 / 2291 / W).